The chain runs to 875 residues: E3 SUMO-protein ligase SIZ1 (875 aa).

One can recognise an SAP domain in the interval 12–46 (LAYFRIKELKDILNQLGLPKQGKKQDLIDRVLALL). The PHD-type zinc-finger motif lies at 114 to 169 (KVRCICSSTMVNDSMIQCEDQRCQVWQHLNCVLIPDKPGESAEVPPVFYCELCRLS). The SP-RING-type zinc finger occupies 349 to 430 (SDLEVVAESV…FNRITSLLRN (82 aa)). Residues C380, H382, C403, and C406 each coordinate Zn(2+). Residues 796–820 (GGGGNEEPAPADVNSQPQIPSTETG) form a disordered region. Polar residues predominate over residues 808–819 (VNSQPQIPSTET).

This sequence belongs to the PIAS family.

Its subcellular location is the nucleus. It participates in protein modification; protein sumoylation. Probable SUMO E3 ligase that may regulate Pi starvation responses. The chain is E3 SUMO-protein ligase SIZ1 (SIZ1) from Oryza sativa subsp. japonica (Rice).